We begin with the raw amino-acid sequence, 103 residues long: Co-chaperonin GroES (103 aa).

It belongs to the GroES chaperonin family. In terms of assembly, heptamer of 7 subunits arranged in a ring. Interacts with the chaperonin GroEL.

Its subcellular location is the cytoplasm. In terms of biological role, together with the chaperonin GroEL, plays an essential role in assisting protein folding. The GroEL-GroES system forms a nano-cage that allows encapsulation of the non-native substrate proteins and provides a physical environment optimized to promote and accelerate protein folding. GroES binds to the apical surface of the GroEL ring, thereby capping the opening of the GroEL channel. The polypeptide is Co-chaperonin GroES (Prochlorococcus marinus (strain MIT 9312)).